A 311-amino-acid chain; its full sequence is Formimidoylglutamase (311 aa).

The Mn(2+) site is built by His130, Asp155, His157, Asp159, Cys242, and Asp244.

The protein belongs to the arginase family. The cofactor is Mn(2+).

It carries out the reaction N-formimidoyl-L-glutamate + H2O = formamide + L-glutamate. It participates in amino-acid degradation; L-histidine degradation into L-glutamate; L-glutamate from N-formimidoyl-L-glutamate (hydrolase route): step 1/1. In terms of biological role, catalyzes the conversion of N-formimidoyl-L-glutamate to L-glutamate and formamide. The chain is Formimidoylglutamase from Staphylococcus aureus (strain bovine RF122 / ET3-1).